Here is a 188-residue protein sequence, read N- to C-terminus: Adenine phosphoribosyltransferase (188 aa).

The protein belongs to the purine/pyrimidine phosphoribosyltransferase family. As to quaternary structure, homodimer.

The protein resides in the cytoplasm. It carries out the reaction AMP + diphosphate = 5-phospho-alpha-D-ribose 1-diphosphate + adenine. It participates in purine metabolism; AMP biosynthesis via salvage pathway; AMP from adenine: step 1/1. In terms of biological role, catalyzes a salvage reaction resulting in the formation of AMP, that is energically less costly than de novo synthesis. The sequence is that of Adenine phosphoribosyltransferase from Burkholderia orbicola (strain MC0-3).